The sequence spans 153 residues: Small ribosomal subunit protein uS19 (153 aa).

Residues 1–63 (MGFRGAWNKR…QEIWDEFRAF (63 aa)) are unknown. The small ribosomal subunit protein uS19 stretch occupies residues 64–153 (VNKKAWVDPK…EKSAKVVKKK (90 aa)).

Belongs to the universal ribosomal protein uS19 family.

Its function is as follows. Protein S19 forms a complex with S13 that binds strongly to the 16S ribosomal RNA. The sequence is that of Small ribosomal subunit protein uS19 from Hydrogenobaculum sp. (strain Y04AAS1).